The sequence spans 695 residues: MSAPARPAPAAPIRVTAGTTAGQAVRDAGLPSRGAPDAVVVVRDADGRLRDLSWVPDTDVEVTPVAADTEDGRSVIRHSAAHVLAQAVQEMFPDAKLGIGPPITDGFYYDFDVAEPFTPEHLQALEKKMRKIVKDGQIFERRVFGSKDEARAELASEPYKLELIDDKSGADDPEVMEVGGDELTAYDNLNPRTRERVWGDLCRGPHIPTTRYIPAFTLTRSSAAYWRGDQNNASLQRIYGTAWESQEALDRHLELIEEAQRRDHRKLGVELDLFSFPDELGSGLPVFHPKGGVVRRELEEYSRRKHIEAGYEFVNTPHITKEQLYITSGHLEWYADGMFPPMQIDAEYNEDGTVRKPGQDYYLKPMNCPMHHLIYRSRGRSYRELPLRLFEFGSVYRYEKSGVIHGLTRVRGMTQDDAHIYCTREEMRDELARLLQFVLDLLADYGLDDFYLELSTKDPDKFVGSDDLWEEATETLREVAESSGLALVPDPGGAAFYGPKISVQVRDALGRNWQMSTIQLDFNMPDRFELEYTSSDGTRRRPVLIHRALFGSIERFFGVLTEHYAGAFPVWLAPVQVVGIPVADAHAGYLDGVAAELRRRGIRVEVDASDDRMAKKIVNHTNQKVPFMLLAGDKDVEAGAVSFRFGDRTQINGVPRDQAVEAIVDWVNRRENATPTAELVVLPSGDAQSPVAGEG.

The 66-residue stretch at 1–66 (MSAPARPAPA…DTDVEVTPVA (66 aa)) folds into the TGS domain. A catalytic region spans residues 263 to 569 (DHRKLGVELD…LTEHYAGAFP (307 aa)). Cys-368, His-419, and His-546 together coordinate Zn(2+).

It belongs to the class-II aminoacyl-tRNA synthetase family. In terms of assembly, homodimer. Zn(2+) is required as a cofactor.

The protein resides in the cytoplasm. The enzyme catalyses tRNA(Thr) + L-threonine + ATP = L-threonyl-tRNA(Thr) + AMP + diphosphate + H(+). Its function is as follows. Catalyzes the attachment of threonine to tRNA(Thr) in a two-step reaction: L-threonine is first activated by ATP to form Thr-AMP and then transferred to the acceptor end of tRNA(Thr). Also edits incorrectly charged L-seryl-tRNA(Thr). This Mycolicibacterium gilvum (strain PYR-GCK) (Mycobacterium gilvum (strain PYR-GCK)) protein is Threonine--tRNA ligase.